A 410-amino-acid chain; its full sequence is Protein CNPPD1 (410 aa).

A helical membrane pass occupies residues Cys-233–Ile-253.

This sequence belongs to the CNPPD1 family.

Its subcellular location is the membrane. The chain is Protein CNPPD1 (CNPPD1) from Pongo abelii (Sumatran orangutan).